An 83-amino-acid chain; its full sequence is Large ribosomal subunit protein eL31 (83 aa).

It belongs to the eukaryotic ribosomal protein eL31 family.

This Methanococcus vannielii (strain ATCC 35089 / DSM 1224 / JCM 13029 / OCM 148 / SB) protein is Large ribosomal subunit protein eL31.